The sequence spans 488 residues: 3-octaprenyl-4-hydroxybenzoate carboxy-lyase (488 aa).

Asn172 serves as a coordination point for Mn(2+). Prenylated FMN is bound by residues 175–177 (IYR), 189–191 (RWL), and 194–195 (RG). Glu238 contributes to the Mn(2+) binding site. The active-site Proton donor is the Asp287.

This sequence belongs to the UbiD family. Homohexamer. Prenylated FMN serves as cofactor. Mn(2+) is required as a cofactor.

The protein resides in the cell membrane. The catalysed reaction is a 4-hydroxy-3-(all-trans-polyprenyl)benzoate + H(+) = a 2-(all-trans-polyprenyl)phenol + CO2. It functions in the pathway cofactor biosynthesis; ubiquinone biosynthesis. Its function is as follows. Catalyzes the decarboxylation of 3-octaprenyl-4-hydroxy benzoate to 2-octaprenylphenol, an intermediate step in ubiquinone biosynthesis. The chain is 3-octaprenyl-4-hydroxybenzoate carboxy-lyase from Hahella chejuensis (strain KCTC 2396).